Consider the following 320-residue polypeptide: Methylenetetrahydrofolate dehydrogenase [NAD(+)] (320 aa).

The active site involves Cys150. NAD(+)-binding positions include 185-186, 208-209, and 274-276; these read RS, DV, and FAC.

Belongs to the tetrahydrofolate dehydrogenase/cyclohydrolase family. Homodimer. In terms of processing, the N-terminus is blocked.

It localises to the cytoplasm. It is found in the nucleus. The enzyme catalyses (6R)-5,10-methylene-5,6,7,8-tetrahydrofolate + NAD(+) = (6R)-5,10-methenyltetrahydrofolate + NADH. In terms of biological role, catalyzes oxidation of cytoplasmic one-carbon units for purine biosynthesis. The chain is Methylenetetrahydrofolate dehydrogenase [NAD(+)] (MTD1) from Saccharomyces cerevisiae (strain ATCC 204508 / S288c) (Baker's yeast).